The primary structure comprises 510 residues: DNA nucleotidylexotransferase (510 aa).

The interval 1–22 (MDPLQAVHLGPRKKRPRQLGTP) is disordered. The Nuclear localization signal signature appears at 11–17 (PRKKRPR). Residues 27–124 (PYDIRFRDLV…KPVEMMGRHQ (98 aa)) form the BRCT domain. S134 carries the phosphoserine modification. Positions 151-510 (SQYACQRRTT…DYIEPWERNA (360 aa)) are mediates interaction with DNTTIP2. The tract at residues 258–262 (VGLKT) is involved in DNA binding. A 2'-deoxyribonucleoside 5'-triphosphate-binding positions include 333-338 (GFRRGK) and 342-345 (HDVD). Residues D343, D345, and D434 each contribute to the Mg(2+) site. 449-450 (GW) serves as a coordination point for a 2'-deoxyribonucleoside 5'-triphosphate.

It belongs to the DNA polymerase type-X family. Interacts with PRP19 and DNTTIP1. Forms a ternary complex with DNTTIP2 and core histone. Released from this complex by PCNA. Interacts with TRERF1. It depends on Mg(2+) as a cofactor. Isoform TDT-L: Expressed in the thymus, and, at lower levels, in the bone marrow. Detected in both cycling and noncycling pro-B and pre-B cells (at protein level). Isoform TDT-S: Expressed in both cycling and noncycling pro-B, but not pre-B, cells (at protein level). Not detected in mature peripheral or germinal center B cells.

It localises to the nucleus. It is found in the cytoplasm. The catalysed reaction is DNA(n) + a 2'-deoxyribonucleoside 5'-triphosphate = DNA(n+1) + diphosphate. Transferase that catalyzes the nontemplated addition of nucleoside triphosphate to coding ends during V(D)J recombination (N addition). Involved in the generation of diversity in the antigen-binding region of immunoglobulin heavy and light chains and T-cell receptors during B- and T-cell development. Does not act on double-stranded DNA with blunt ends. Its function is as follows. 3'-to-5' DNA exonuclease. Involved in the generation of diversity in the antigen-binding region of immunoglobulin heavy and light chains and T-cell receptors during B- and T-cell development. Acts on single-stranded and double-stranded DNA with 3' or 5' extensions, but not on double-stranded DNA with blunt ends. Attenuates not only isoform TDT-S-catalyzed N addition, but also P (palindromic) addition in coding joins. Lacks terminal transferase activity. This chain is DNA nucleotidylexotransferase (Dntt), found in Mus musculus (Mouse).